The chain runs to 160 residues: Cell division protein SepF (160 aa).

Residues 18–30 show a composition bias toward acidic residues; it reads AEGEDDFEDDVDT. Positions 18 to 72 are disordered; that stretch reads AEGEDDFEDDVDTGETSFDSDHSVTPMPSSSASASTPSAPREQSNPFQGGRVSRI. The segment covering 45 to 57 has biased composition (low complexity); that stretch reads PSSSASASTPSAP.

The protein belongs to the SepF family. Homodimer. Interacts with FtsZ.

It is found in the cytoplasm. Cell division protein that is part of the divisome complex and is recruited early to the Z-ring. Probably stimulates Z-ring formation, perhaps through the cross-linking of FtsZ protofilaments. Its function overlaps with FtsA. The chain is Cell division protein SepF from Bifidobacterium adolescentis (strain ATCC 15703 / DSM 20083 / NCTC 11814 / E194a).